A 159-amino-acid polypeptide reads, in one-letter code: 2-C-methyl-D-erythritol 2,4-cyclodiphosphate synthase (159 aa).

Positions 8 and 10 each coordinate a divalent metal cation. Residues 8–10 and 34–35 each bind 4-CDP-2-C-methyl-D-erythritol 2-phosphate; these read DVH and HS. Histidine 42 is an a divalent metal cation binding site. Residues 56–58, 61–65, 100–106, 132–135, phenylalanine 139, and arginine 142 each bind 4-CDP-2-C-methyl-D-erythritol 2-phosphate; these read DIG, FPDTD, AQAPKML, and TTTE.

This sequence belongs to the IspF family. As to quaternary structure, homotrimer. A divalent metal cation is required as a cofactor.

The catalysed reaction is 4-CDP-2-C-methyl-D-erythritol 2-phosphate = 2-C-methyl-D-erythritol 2,4-cyclic diphosphate + CMP. It functions in the pathway isoprenoid biosynthesis; isopentenyl diphosphate biosynthesis via DXP pathway; isopentenyl diphosphate from 1-deoxy-D-xylulose 5-phosphate: step 4/6. In terms of biological role, involved in the biosynthesis of isopentenyl diphosphate (IPP) and dimethylallyl diphosphate (DMAPP), two major building blocks of isoprenoid compounds. Catalyzes the conversion of 4-diphosphocytidyl-2-C-methyl-D-erythritol 2-phosphate (CDP-ME2P) to 2-C-methyl-D-erythritol 2,4-cyclodiphosphate (ME-CPP) with a corresponding release of cytidine 5-monophosphate (CMP). The polypeptide is 2-C-methyl-D-erythritol 2,4-cyclodiphosphate synthase (Escherichia coli O81 (strain ED1a)).